A 327-amino-acid chain; its full sequence is Methionyl-tRNA formyltransferase (327 aa).

Residue 121-124 (SLLP) participates in (6S)-5,6,7,8-tetrahydrofolate binding.

The protein belongs to the Fmt family.

It carries out the reaction L-methionyl-tRNA(fMet) + (6R)-10-formyltetrahydrofolate = N-formyl-L-methionyl-tRNA(fMet) + (6S)-5,6,7,8-tetrahydrofolate + H(+). Attaches a formyl group to the free amino group of methionyl-tRNA(fMet). The formyl group appears to play a dual role in the initiator identity of N-formylmethionyl-tRNA by promoting its recognition by IF2 and preventing the misappropriation of this tRNA by the elongation apparatus. In Paraburkholderia phymatum (strain DSM 17167 / CIP 108236 / LMG 21445 / STM815) (Burkholderia phymatum), this protein is Methionyl-tRNA formyltransferase.